The following is a 28-amino-acid chain: Phospholipase A2 (28 aa).

G28 lines the Ca(2+) pocket.

Ca(2+) is required as a cofactor. In terms of tissue distribution, expressed by the venom gland.

It is found in the secreted. It carries out the reaction a 1,2-diacyl-sn-glycero-3-phosphocholine + H2O = a 1-acyl-sn-glycero-3-phosphocholine + a fatty acid + H(+). Its function is as follows. PLA2 catalyzes the calcium-dependent hydrolysis of the 2-acyl groups in 3-sn-phosphoglycerides. In Scolopendra dehaani (Thai centipede), this protein is Phospholipase A2.